The chain runs to 927 residues: Protein translocase subunit SecA (927 aa).

Residues Gln-86, Gly-104–Thr-108, and Asp-494 contribute to the ATP site. The interval Tyr-853–Arg-927 is disordered. Over residues Gly-860–Glu-879 the composition is skewed to basic and acidic residues. Over residues Arg-907–Arg-927 the composition is skewed to basic residues.

Belongs to the SecA family. In terms of assembly, monomer and homodimer. Part of the essential Sec protein translocation apparatus which comprises SecA, SecYEG and auxiliary proteins SecDF. Other proteins may also be involved.

Its subcellular location is the cell membrane. The protein localises to the cytoplasm. It carries out the reaction ATP + H2O + cellular proteinSide 1 = ADP + phosphate + cellular proteinSide 2.. Its function is as follows. Part of the Sec protein translocase complex. Interacts with the SecYEG preprotein conducting channel. Has a central role in coupling the hydrolysis of ATP to the transfer of proteins into and across the cell membrane, serving as an ATP-driven molecular motor driving the stepwise translocation of polypeptide chains across the membrane. The chain is Protein translocase subunit SecA from Kocuria rhizophila (strain ATCC 9341 / DSM 348 / NBRC 103217 / DC2201).